Reading from the N-terminus, the 309-residue chain is Postacrosomal sheath WW domain-binding protein (309 aa).

In terms of domain architecture, GRAM spans 45-87; sequence GRKTGTLFLTSYRVIFITSCSISDPMLSFMMPFDLMTNLTVEQ. 10 consecutive repeat copies span residues 175–181, 182–188, 189–195, 217–223, 224–230, 231–237, 238–244, 245–251, 252–258, and 259–265. Residues 175–265 are 10 X 7 AA tandem repeat of Y-G-X-P-P-X-G; sequence YGAPPAGYGA…PLGYGAPPAG (91 aa). Positions 186-189 match the PPxY motif motif; that stretch reads PPGY. A compositionally biased stretch (low complexity) spans 251-272; the sequence is GYGAPPLGYGAPPAGNEGPPAG. A disordered region spans residues 251 to 309; sequence GYGAPPLGYGAPPAGNEGPPAGYRASPAGSGARPQESTAAQAPENEASLPSASSSQVHS. Residues 298–309 are compositionally biased toward polar residues; that stretch reads SLPSASSSQVHS.

As to expression, expressed in testis.

Its function is as follows. May play a role in meiotic resumption and pronuclear formation, mediated by a WW domain-signaling pathway during fertilization. This Homo sapiens (Human) protein is Postacrosomal sheath WW domain-binding protein (WBP2NL).